A 474-amino-acid polypeptide reads, in one-letter code: Histone H2B.v2 (474 aa).

Disordered stretches follow at residues 99-123, 276-295, and 328-394; these read FNNG…QNEL, TTFT…ISGD, and FNDN…VNNN. 3 stretches are compositionally biased toward low complexity: residues 100–110, 276–286, and 329–368; these read NNGGNNNNNNE, TTFTQQEQQEQ, and NDNN…NNKN.

It belongs to the histone H2B family.

This is Histone H2B.v2 (H2Bv2) from Dictyostelium discoideum (Social amoeba).